The following is a 651-amino-acid chain: Translation initiation factor eIF2B subunit delta (651 aa).

The disordered stretch occupies residues 1–108 (MSESEAKSRS…NERNVKKSTL (108 aa)). Residue Ser-2 is modified to N-acetylserine. A compositionally biased stretch (low complexity) spans 11 to 28 (ATPPSKAKQATPTTTAAA). Composition is skewed to basic and acidic residues over residues 30–49 (GEKKLTNKELKELKKQEKAA) and 76–90 (KQLQREQQQKREQKQ). Position 106 is a phosphoserine (Ser-106). Thr-121 carries the phosphothreonine modification. Positions 566–600 (AMENKPKGNKIGGKKGSEGESKDASNEEDSNSKNI) are disordered. A compositionally biased stretch (basic and acidic residues) spans 580-590 (KGSEGESKDAS).

It belongs to the eIF-2B alpha/beta/delta subunits family. In terms of assembly, component of the translation initiation factor 2B (eIF2B) complex which is a heterodecamer of two sets of five different subunits: alpha, beta, gamma, delta and epsilon. Subunits alpha, beta and delta comprise a regulatory subcomplex and subunits epsilon and gamma comprise a catalytic subcomplex. Within the complex, the hexameric regulatory complex resides at the center, with the two heterodimeric catalytic subcomplexes bound on opposite sides.

The protein localises to the cytoplasm. It is found in the cytosol. Acts as a component of the translation initiation factor 2B (eIF2B) complex, which catalyzes the exchange of GDP for GTP on the eukaryotic initiation factor 2 (eIF2) complex gamma subunit. Its guanine nucleotide exchange factor activity is repressed when bound to eIF2 complex phosphorylated on the alpha subunit, thereby limiting the amount of methionyl-initiator methionine tRNA available to the ribosome and consequently global translation is repressed. It activates the synthesis of GCN4 in yeast under amino acid starvation conditions by suppressing the inhibitory effects of multiple AUG codons present in the leader of GCN4 mRNA. It may promote either repression or activation of GCN4 expression depending on amino acid availability. GCD2 is also required for cell viability. Its function can partially be replaced by GCN3 under normal growth conditions in GCD2-defective mutants, under AA starvation conditions GCN3 is an antagonist (GCN4 translational activator). The sequence is that of Translation initiation factor eIF2B subunit delta (GCD2) from Saccharomyces cerevisiae (strain ATCC 204508 / S288c) (Baker's yeast).